Consider the following 274-residue polypeptide: Purine nucleoside phosphorylase YlmD (274 aa).

Position 46–47 (46–47) interacts with inosine; it reads LH. 7 residues coordinate Zn(2+): His80, Cys125, His142, Cys182, Cys183, Cys242, and Cys245. Arg262 contacts inosine.

It belongs to the purine nucleoside phosphorylase YfiH/LACC1 family. The cofactor is Zn(2+).

The catalysed reaction is adenosine + phosphate = alpha-D-ribose 1-phosphate + adenine. It carries out the reaction S-methyl-5'-thioadenosine + phosphate = 5-(methylsulfanyl)-alpha-D-ribose 1-phosphate + adenine. It catalyses the reaction inosine + phosphate = alpha-D-ribose 1-phosphate + hypoxanthine. The enzyme catalyses adenosine + H2O + H(+) = inosine + NH4(+). Functionally, purine nucleoside enzyme that catalyzes the phosphorolysis of adenosine and inosine nucleosides, yielding D-ribose 1-phosphate and the respective free bases, adenine and hypoxanthine. Also catalyzes the phosphorolysis of S-methyl-5'-thioadenosine into adenine and S-methyl-5-thio-alpha-D-ribose 1-phosphate. Also has adenosine deaminase activity. This Geobacillus stearothermophilus (strain DSM 13240 / CIP 106956 / 10) protein is Purine nucleoside phosphorylase YlmD.